The following is a 360-amino-acid chain: Phospho-N-acetylmuramoyl-pentapeptide-transferase (360 aa).

10 helical membrane passes run 25 to 45 (TGGA…WIID), 71 to 91 (TPTM…VLWA), 94 to 114 (LNPY…VGFY), 129 to 148 (SGRT…CYAL), 168 to 188 (TAIY…VGAG), 199 to 219 (GLAI…SYLA), 239 to 259 (LAVL…FNAP), 263 to 283 (IFMG…IAVA), 288 to 308 (FVLA…IVQV), and 337 to 357 (QIVI…LSTL).

The protein belongs to the glycosyltransferase 4 family. MraY subfamily. It depends on Mg(2+) as a cofactor.

It is found in the cell inner membrane. It carries out the reaction UDP-N-acetyl-alpha-D-muramoyl-L-alanyl-gamma-D-glutamyl-meso-2,6-diaminopimeloyl-D-alanyl-D-alanine + di-trans,octa-cis-undecaprenyl phosphate = di-trans,octa-cis-undecaprenyl diphospho-N-acetyl-alpha-D-muramoyl-L-alanyl-D-glutamyl-meso-2,6-diaminopimeloyl-D-alanyl-D-alanine + UMP. It participates in cell wall biogenesis; peptidoglycan biosynthesis. In terms of biological role, catalyzes the initial step of the lipid cycle reactions in the biosynthesis of the cell wall peptidoglycan: transfers peptidoglycan precursor phospho-MurNAc-pentapeptide from UDP-MurNAc-pentapeptide onto the lipid carrier undecaprenyl phosphate, yielding undecaprenyl-pyrophosphoryl-MurNAc-pentapeptide, known as lipid I. This Rhodopseudomonas palustris (strain BisA53) protein is Phospho-N-acetylmuramoyl-pentapeptide-transferase.